The primary structure comprises 319 residues: MKRIGVLTSGGDSPGMNAAIRAVVRKAIYHGVEVFGIYYGYAGLIAGKIKKLEVGDVGDIIHRGGTILYTARCPEFKTEEGQLKGIEQLKKHGIEGLVVIGGDGSYQGAKKLTEHGFPCVGVPGTIDNDIPGTDFTIGFDTALNTVIDAIDKIRDTATSHERTYVIEVMGRHAGDIALWSGLAGGAETILIPEADYDMNDVIARLKRGHERGKKHSIIIVAEGVGSGVEFGKKIQEATGFETRVTVLGHVQRGGSPTAFDRVLASRLGARAVELLLEGKGGRCVGIQNNQLVDHDIVEALANKHTVDQKMYLLSKELSI.

ATP is bound at residue Gly-11. 21–25 (RAVVR) lines the ADP pocket. ATP-binding positions include 72–73 (RC) and 102–105 (GDGS). Asp-103 is a binding site for Mg(2+). 125 to 127 (TID) contacts substrate. Asp-127 acts as the Proton acceptor in catalysis. Arg-154 is a binding site for ADP. Substrate contacts are provided by residues Arg-162 and 169-171 (MGR). ADP contacts are provided by residues 185–187 (GAE), Arg-211, and 213–215 (KKH). Residues Glu-222, Arg-243, and 249–252 (HVQR) contribute to the substrate site.

Belongs to the phosphofructokinase type A (PFKA) family. ATP-dependent PFK group I subfamily. Prokaryotic clade 'B1' sub-subfamily. Homotetramer. Mg(2+) serves as cofactor.

The protein resides in the cytoplasm. The enzyme catalyses beta-D-fructose 6-phosphate + ATP = beta-D-fructose 1,6-bisphosphate + ADP + H(+). Its pathway is carbohydrate degradation; glycolysis; D-glyceraldehyde 3-phosphate and glycerone phosphate from D-glucose: step 3/4. Allosterically activated by ADP and other diphosphonucleosides, and allosterically inhibited by phosphoenolpyruvate. In terms of biological role, catalyzes the phosphorylation of D-fructose 6-phosphate to fructose 1,6-bisphosphate by ATP, the first committing step of glycolysis. This chain is ATP-dependent 6-phosphofructokinase, found in Geobacillus sp. (strain WCH70).